Here is a 112-residue protein sequence, read N- to C-terminus: uncharacterized protein (112 aa).

The chain crosses the membrane as a helical span at residues 75-95; the sequence is ILGVFGGFIYILTPLPIVSGF.

It is found in the membrane. This is an uncharacterized protein from Methanocaldococcus jannaschii (strain ATCC 43067 / DSM 2661 / JAL-1 / JCM 10045 / NBRC 100440) (Methanococcus jannaschii).